We begin with the raw amino-acid sequence, 267 residues long: Hydroxypyruvate/pyruvate aldolase Bphyt_5830 (267 aa).

The Proton acceptor role is filled by histidine 48. A divalent metal cation contacts are provided by glutamate 152 and aspartate 178.

It belongs to the HpcH/HpaI aldolase family. The cofactor is a divalent metal cation.

The catalysed reaction is D-glyceraldehyde + 3-hydroxypyruvate = 2-dehydro-D-galactonate. It carries out the reaction D-glyceraldehyde + 3-hydroxypyruvate = (3R,4S,5R)-3,4,5,6-tetrahydroxy-2-oxohexanoate. The enzyme catalyses D-glyceraldehyde + pyruvate = 2-dehydro-3-deoxy-L-galactonate. Functionally, aldolase which can catalyze in vitro the aldolisation reaction between hydroxypyruvate (HPA) or pyruvate (PA) and D-glyceraldehyde (D-GA). The condensation of hydroxypyruvate and D-glyceraldehyde produces 2-dehydro-D-galactonate as the major product and (3R,4S,5R)-3,4,5,6-tetrahydroxy-2-oxohexanoate. The condensation of pyruvate and D-glyceraldehyde produces 2-dehydro-3-deoxy-L-galactonate. The sequence is that of Hydroxypyruvate/pyruvate aldolase Bphyt_5830 from Paraburkholderia phytofirmans (strain DSM 17436 / LMG 22146 / PsJN) (Burkholderia phytofirmans).